The chain runs to 1404 residues: Microtubule organization protein AKNA (1404 aa).

Disordered stretches follow at residues 1–304 (MASS…VSPL) and 317–382 (QHKQ…RPLI). The residue at position 51 (Ser51) is a Phosphoserine. The span at 70 to 91 (WDPDMQDSEESSGEETEADDAS) shows a compositional bias: acidic residues. The span at 185-203 (KSWSSGTVSLRQPSDSLGS) shows a compositional bias: polar residues. Residue Ser302 is modified to Phosphoserine. 2 positions are modified to phosphoserine: Ser485 and Ser520. The tract at residues 494–549 (AEWWPDPAQDPQASEATGWPFPRTDLSPSSSPGVATPGRLPQSQGIATDQPSTGQT) is disordered. The span at 534-549 (PQSQGIATDQPSTGQT) shows a compositional bias: polar residues. Residue Ser617 is modified to Phosphoserine. Positions 645-659 (MDQTQRETEPCRPDL) are enriched in basic and acidic residues. The tract at residues 645-708 (MDQTQRETEP…TSPGSSCTLP (64 aa)) is disordered. 2 stretches are compositionally biased toward polar residues: residues 660–674 (QDSTPTMSFLPQSAH) and 686–707 (DGQTYQEPATTTTTSPGSSCTL). Ser750 and Ser753 each carry phosphoserine. The tract at residues 754–787 (LPEALRDEDEDDLEEEEEEQDHQGPLEVDSPATA) is PEST. Disordered stretches follow at residues 755–1038 (PEAL…STAN) and 1085–1185 (HSTQ…RERV). A compositionally biased stretch (acidic residues) spans 759–773 (RDEDEDDLEEEEEEQ). A compositionally biased stretch (basic and acidic residues) spans 803–813 (TQAEESHRDAT). Phosphoserine occurs at positions 831 and 860. Positions 885–906 (HTEEPWMVSPETDSGFVGSETS) are PEST. 3 stretches are compositionally biased toward polar residues: residues 903 to 914 (SETSIVSPFTQT), 921 to 933 (HVSTSGPSAQHLT), and 963 to 974 (SRTQQHFSSLSS). Ser971 carries the phosphoserine modification. Residues 1015–1029 (TSPDSAPAPTAASTP) are compositionally biased toward low complexity. Residues 1085 to 1098 (HSTQTQEKLGSSPS) show a composition bias toward polar residues. Residues 1088–1096 (QTQEKLGSS) constitute a DNA-binding region (a.T hook). Ser1144 and Ser1145 each carry phosphoserine. Residues 1155-1167 (SSEKSRTFEEHPE) are compositionally biased toward basic and acidic residues. Residue Ser1200 is modified to Phosphoserine. 2 disordered regions span residues 1208–1235 (SGTPSCPHCHPIRTQDTGSAVSRDTTRG) and 1253–1286 (SAEADGSSSGPSEKNTPKKPSTPILKRKNRQTGS). Positions 1221–1235 (TQDTGSAVSRDTTRG) are enriched in polar residues. Residues Ser1339, Ser1352, and Ser1389 each carry the phosphoserine modification.

It belongs to the AKNA family. Interacts with DCTN1. Interacts with MAPRE1/EB1. Interacts with ODF2. Interacts with CAMSAP3. Phosphorylated; phosphorylation regulates dissociation from and reassembly at the centrosome. In terms of tissue distribution, expressed in neural stem cells isolated at the peak of subventricular zone (SVZ): localizes at the subdistal appendages of the mother centriole in specific subtypes of neural stem cells and in almost all basal progenitors.

The protein localises to the cytoplasm. Its subcellular location is the cytoskeleton. The protein resides in the microtubule organizing center. It is found in the centrosome. It localises to the centriole. The protein localises to the nucleus. Centrosomal protein that plays a key role in cell delamination by regulating microtubule organization. Required for the delamination and retention of neural stem cells from the subventricular zone during neurogenesis. Also regulates the epithelial-to-mesenchymal transition in other epithelial cells. Acts by increasing centrosomal microtubule nucleation and recruiting nucleation factors and minus-end stabilizers, thereby destabilizing microtubules at the adherens junctions and mediating constriction of the apical endfoot. In addition, may also act as a transcription factor that specifically activates the expression of the CD40 receptor and its ligand CD40L/CD154, two cell surface molecules on lymphocytes that are critical for antigen-dependent-B-cell development. Binds to A/T-rich promoters. It is unclear how it can both act as a microtubule organizer and as a transcription factor; additional evidences are required to reconcile these two apparently contradictory functions. This is Microtubule organization protein AKNA from Mus musculus (Mouse).